A 113-amino-acid polypeptide reads, in one-letter code: Large ribosomal subunit protein bL17 (113 aa).

This sequence belongs to the bacterial ribosomal protein bL17 family. Part of the 50S ribosomal subunit. Contacts protein L32.

The polypeptide is Large ribosomal subunit protein bL17 (Clostridium botulinum (strain Loch Maree / Type A3)).